The chain runs to 38 residues: L-amino-acid oxidase (38 aa).

Belongs to the flavin monoamine oxidase family. FIG1 subfamily. As to quaternary structure, homodimer; non-covalently linked. The cofactor is FAD. In terms of processing, N-glycosylated. Expressed by the venom gland.

It localises to the secreted. It catalyses the reaction an L-alpha-amino acid + O2 + H2O = a 2-oxocarboxylate + H2O2 + NH4(+). It carries out the reaction L-leucine + O2 + H2O = 4-methyl-2-oxopentanoate + H2O2 + NH4(+). The catalysed reaction is L-phenylalanine + O2 + H2O = 3-phenylpyruvate + H2O2 + NH4(+). The enzyme catalyses L-tryptophan + O2 + H2O = indole-3-pyruvate + H2O2 + NH4(+). It catalyses the reaction L-methionine + O2 + H2O = 4-methylsulfanyl-2-oxobutanoate + H2O2 + NH4(+). It carries out the reaction L-arginine + O2 + H2O = 5-guanidino-2-oxopentanoate + H2O2 + NH4(+). The catalysed reaction is L-2-aminohexanoate + O2 + H2O = 2-oxohexanoate + H2O2 + NH4(+). The enzyme catalyses L-2-aminopentanoate + O2 + H2O = 2-oxopentanoate + H2O2 + NH4(+). It catalyses the reaction L-tyrosine + O2 + H2O = 3-(4-hydroxyphenyl)pyruvate + H2O2 + NH4(+). Its function is as follows. Catalyzes an oxidative deamination of predominantly hydrophobic and aromatic L-amino acids, thus producing hydrogen peroxide that may contribute to the diverse toxic effects of this enzyme. Is very active against L-Phe and L-Tyr, moderately active against L-Trp, L-Met, L-Leu, L-norleucine (L-2-aminohexanoate), L-Arg and L-norvaline (L-2-aminopentanoate), and slightly active against L-His, L-cystine, and L-Ile. L-Gln, L-Lys, L-Asn, L-ornithine, L-Ala and L-Val are oxidized very slowly. Exhibits diverse biological activities, such as hemorrhage, hemolysis, edema, apoptosis of vascular endothelial cells or tumor cell lines, antibacterial and antiparasitic activities. This protein inhibits both agonist- and shear stress-induced platelet aggregation (SIPA). Effects of snake L-amino oxidases on platelets are controversial, since they either induce aggregation or inhibit agonist-induced aggregation. These different effects are probably due to different experimental conditions. This is L-amino-acid oxidase from Naja kaouthia (Monocled cobra).